A 405-amino-acid chain; its full sequence is Elongation factor Tu (405 aa).

Positions 10-215 (KPHVNVGTIG…AVDSYIPTPE (206 aa)) constitute a tr-type G domain. A G1 region spans residues 19–26 (GHVDHGKT). 19 to 26 (GHVDHGKT) serves as a coordination point for GTP. Thr26 is a Mg(2+) binding site. The tract at residues 61-65 (GITIN) is G2. Residues 82 to 85 (DCPG) are G3. Residues 82–86 (DCPGH) and 137–140 (NKVD) each bind GTP. Residues 137-140 (NKVD) are G4. The tract at residues 175-177 (SAL) is G5.

This sequence belongs to the TRAFAC class translation factor GTPase superfamily. Classic translation factor GTPase family. EF-Tu/EF-1A subfamily. Monomer.

It localises to the cytoplasm. The enzyme catalyses GTP + H2O = GDP + phosphate + H(+). Functionally, GTP hydrolase that promotes the GTP-dependent binding of aminoacyl-tRNA to the A-site of ribosomes during protein biosynthesis. The protein is Elongation factor Tu of Deinonema sp.